The primary structure comprises 486 residues: tRNA (uracil-5-)-methyltransferase homolog B (486 aa).

Gln-305, Glu-355, and Asn-405 together coordinate S-adenosyl-L-methionine. The active-site Nucleophile is the Cys-433. Glu-479 (proton acceptor) is an active-site residue.

Belongs to the class I-like SAM-binding methyltransferase superfamily. RNA M5U methyltransferase family.

The protein resides in the mitochondrion matrix. The enzyme catalyses uridine(54) in tRNA + S-adenosyl-L-methionine = 5-methyluridine(54) in tRNA + S-adenosyl-L-homocysteine + H(+). It carries out the reaction a uridine in 12S rRNA + S-adenosyl-L-methionine = a 5-methyluridine in 12S rRNA + S-adenosyl-L-homocysteine + H(+). In terms of biological role, mitochondrial S-adenosyl-L-methionine-dependent methyltransferase that catalyzes the formation of 5-methyl-uridine in tRNAs and 12S rRNA. Catalyzes the methylation of uridine at position 54 (m5U54) in all tRNAs. Specifically methylates the uridine in position 429 of 12S rRNA (m5U429). Does not affect RNA stability or mitochondrial translation. In Pongo abelii (Sumatran orangutan), this protein is tRNA (uracil-5-)-methyltransferase homolog B (TRMT2B).